Reading from the N-terminus, the 401-residue chain is Probable aspartate/prephenate aminotransferase (401 aa).

Gly39, Trp125, and Asn175 together coordinate L-aspartate. Lys239 is modified (N6-(pyridoxal phosphate)lysine). Residue Arg375 coordinates L-aspartate.

It belongs to the class-I pyridoxal-phosphate-dependent aminotransferase family. Homodimer. Pyridoxal 5'-phosphate is required as a cofactor.

Its subcellular location is the cytoplasm. The enzyme catalyses L-aspartate + 2-oxoglutarate = oxaloacetate + L-glutamate. It catalyses the reaction L-arogenate + 2-oxoglutarate = prephenate + L-glutamate. Functionally, catalyzes the reversible conversion of aspartate and 2-oxoglutarate to glutamate and oxaloacetate. Can also transaminate prephenate in the presence of glutamate. This is Probable aspartate/prephenate aminotransferase (aatA) from Rickettsia conorii (strain ATCC VR-613 / Malish 7).